The primary structure comprises 766 residues: Alpha-onocerin synthase LCD (766 aa).

PFTB repeat units follow at residues 101–143 (LCRA…GALD), 151–192 (QREI…RLMG), 456–507 (QESY…STTD), 517–558 (IHEC…PGYK), 594–634 (IQEG…LASG), 643–684 (IQRA…HVVH), and 705–752 (LHRA…WALG). D488 functions as the Proton donor in the catalytic mechanism.

This sequence belongs to the terpene cyclase/mutase family.

The catalysed reaction is pre-alpha-onocerin = alpha-onocerin. Its pathway is secondary metabolite biosynthesis; terpenoid biosynthesis. Oxidosqualene cyclase involved in the biosynthesis of alpha-onocerin, a triterpenoid characterized by a symmetrical structure due to cyclizations at both termini of dioxidosqualene that inhibits acetylcholinesterase. Catalyzes the second half of the cyclization, exclusively from pre-alpha-onocerin. The polypeptide is Alpha-onocerin synthase LCD (Lycopodium clavatum (Stag's-horn clubmoss)).